The chain runs to 469 residues: Adenosylhomocysteinase (469 aa).

Substrate-binding residues include threonine 63, aspartate 139, and glutamate 164. 165-167 (TTT) contacts NAD(+). 2 residues coordinate substrate: lysine 194 and aspartate 198. NAD(+)-binding positions include asparagine 199, 228–233 (GYGDVG), glutamate 251, asparagine 300, 321–323 (IGH), and asparagine 375.

Belongs to the adenosylhomocysteinase family. NAD(+) is required as a cofactor.

The protein localises to the cytoplasm. The enzyme catalyses S-adenosyl-L-homocysteine + H2O = L-homocysteine + adenosine. It functions in the pathway amino-acid biosynthesis; L-homocysteine biosynthesis; L-homocysteine from S-adenosyl-L-homocysteine: step 1/1. Functionally, may play a key role in the regulation of the intracellular concentration of adenosylhomocysteine. The sequence is that of Adenosylhomocysteinase from Pseudomonas syringae pv. tomato (strain ATCC BAA-871 / DC3000).